Consider the following 247-residue polypeptide: Caffeoyl-CoA O-methyltransferase 2 (247 aa).

A substrate-binding site is contributed by lysine 21. Residues threonine 63, glutamate 85, glycine 87–valine 88, serine 93, aspartate 111, and alanine 140 contribute to the S-adenosyl-L-methionine site. Position 163 (aspartate 163) interacts with substrate. Position 163 (aspartate 163) interacts with a divalent metal cation. Aspartate 165 lines the S-adenosyl-L-methionine pocket. Positions 189 and 190 each coordinate a divalent metal cation. Asparagine 194 contributes to the substrate binding site.

The protein belongs to the class I-like SAM-binding methyltransferase superfamily. Cation-dependent O-methyltransferase family. CCoAMT subfamily. A divalent metal cation is required as a cofactor.

The enzyme catalyses (E)-caffeoyl-CoA + S-adenosyl-L-methionine = (E)-feruloyl-CoA + S-adenosyl-L-homocysteine + H(+). Its pathway is aromatic compound metabolism; phenylpropanoid biosynthesis. Its function is as follows. Methylates caffeoyl-CoA to feruloyl-CoA and 5-hydroxyferuloyl-CoA to sinapoyl-CoA. Plays a role in the synthesis of feruloylated polysaccharides. Involved in the reinforcement of the plant cell wall. Also involved in the responding to wounding or pathogen challenge by the increased formation of cell wall-bound ferulic acid polymers. The polypeptide is Caffeoyl-CoA O-methyltransferase 2 (CCOAOMT2) (Eucalyptus globulus (Tasmanian blue gum)).